A 203-amino-acid chain; its full sequence is Peptide deformylase (203 aa).

Fe cation contacts are provided by Cys130 and His173. Glu174 is an active-site residue. Residue His177 coordinates Fe cation.

The protein belongs to the polypeptide deformylase family. Fe(2+) is required as a cofactor.

The catalysed reaction is N-terminal N-formyl-L-methionyl-[peptide] + H2O = N-terminal L-methionyl-[peptide] + formate. Its function is as follows. Removes the formyl group from the N-terminal Met of newly synthesized proteins. Requires at least a dipeptide for an efficient rate of reaction. N-terminal L-methionine is a prerequisite for activity but the enzyme has broad specificity at other positions. This Streptococcus pneumoniae serotype 19F (strain G54) protein is Peptide deformylase.